Reading from the N-terminus, the 215-residue chain is CASP-like protein UU3 (215 aa).

The Cytoplasmic portion of the chain corresponds to 1–44 (MATAWESEYFDKVTPGERERAVPPMVPQQTPPPVYIQPQVSRNG). Residues 45 to 65 (IVASIVLRLLTLIFAVVALAV) traverse the membrane as a helical segment. Residues 66–93 (LASNTGSFQVSTGSATSVKTIKFTILSA) are Extracellular-facing. Residues 94–114 (FTYLFAVCGVVAVYSLLLIIV) form a helical membrane-spanning segment. Residues 115–128 (EMIDLAVRGFTTHT) are Cytoplasmic-facing. Residues 129 to 149 (LVAIFVFVLDQTMAYVLISAA) traverse the membrane as a helical segment. The Extracellular portion of the chain corresponds to 150-185 (SASANGVKVSRDESNITGYKFDISCSNLGIDDYCTK). N164 carries N-linked (GlcNAc...) asparagine glycosylation. Residues 186–206 (ASASVAIAFIAFLFMAITAGV) form a helical membrane-spanning segment. Residues 207-215 (SARRLFKLP) lie on the Cytoplasmic side of the membrane.

It belongs to the Casparian strip membrane proteins (CASP) family. As to quaternary structure, homodimer and heterodimers.

The protein resides in the cell membrane. This is CASP-like protein UU3 from Physcomitrium patens (Spreading-leaved earth moss).